A 61-amino-acid polypeptide reads, in one-letter code: U-stichotoxin-Hcr1a (61 aa).

Positions Met1 to Gly21 are cleaved as a signal peptide. Residues Phe22–Arg31 constitute a propeptide that is removed on maturation. Pro36 carries the post-translational modification Hydroxyproline. Cystine bridges form between Cys41–Cys53 and Cys44–Cys59.

The protein belongs to the Hau1a/HC18/HC19 family.

It is found in the secreted. The protein localises to the nematocyst. Functionally, toxin that is lethal to crab. Does not produce the typical symptoms associated with sodium channel toxins in crabs, suggesting that it likely does not act on sodium channels. This Radianthus crispa (Leathery sea anemone) protein is U-stichotoxin-Hcr1a.